Here is a 177-residue protein sequence, read N- to C-terminus: Nucleoside triphosphate/diphosphate phosphatase (177 aa).

The Proton donor role is filled by Arg23. 6 residues coordinate Mg(2+): Asn87, Asp103, Asp105, Asp107, Asp120, and Glu123.

This sequence belongs to the Ntdp family. Mg(2+) is required as a cofactor.

The enzyme catalyses a ribonucleoside 5'-triphosphate + H2O = a ribonucleoside 5'-diphosphate + phosphate + H(+). It catalyses the reaction a ribonucleoside 5'-diphosphate + H2O = a ribonucleoside 5'-phosphate + phosphate + H(+). In terms of biological role, has nucleoside phosphatase activity towards nucleoside triphosphates and nucleoside diphosphates. The sequence is that of Nucleoside triphosphate/diphosphate phosphatase from Streptococcus sanguinis (strain SK36).